A 526-amino-acid chain; its full sequence is Delayed-rectifier potassium channel regulatory subunit KCNS1 (526 aa).

Topologically, residues 1–217 are cytoplasmic; it reads MLMLLVRGTH…LTMENPGYSL (217 aa). A helical transmembrane segment spans residues 218-239; it reads PSKLFSCVSISVVLASIAAMCI. Residues 240–270 lie on the Extracellular side of the membrane; the sequence is HSLPEYQAREAAAAVAAVAAGRSPEGVRDDP. Residues 271 to 293 form a helical membrane-spanning segment; the sequence is VLRRLEYFCIAWFSFEVSSRLLL. At 294–304 the chain is on the cytoplasmic side; it reads APSTRNFFCHP. Residues 305-322 form a helical membrane-spanning segment; that stretch reads LNLIDIVSVLPFYLTLLA. Residues 323–337 lie on the Extracellular side of the membrane; sequence GVALGDQGGKEFGHL. Residues 338-358 form a helical; Voltage-sensor membrane-spanning segment; it reads GKVVQVFRLMRIFRVLKLARH. Residues 359–373 lie on the Cytoplasmic side of the membrane; sequence STGLRSLGATLKHSY. Residues 374–395 traverse the membrane as a helical segment; that stretch reads REVGILLLYLAVGVSVFSGVAY. Over 396-408 the chain is Extracellular; the sequence is TAEKEEDVGFNTI. The helical intramembrane region spans 409–420; the sequence is PACWWWGTVSMT. A Selectivity filter motif is present at residues 421–426; that stretch reads TVGYGD. Residues 421–428 lie within the membrane without spanning it; that stretch reads TVGYGDVV. The Extracellular portion of the chain corresponds to 429 to 435; that stretch reads PVTVAGK. A helical membrane pass occupies residues 436–464; it reads LAASGCILGGILVVALPITIIFNKFSHFY. Residues 465 to 526 are Cytoplasmic-facing; it reads RRQKALEAAV…PSEPPHPQRY (62 aa). Positions 492–526 are disordered; it reads VSEASLETSGETSQEGRSADLESQAPSEPPHPQRY. Positions 496–507 are enriched in polar residues; the sequence is SLETSGETSQEG.

This sequence belongs to the potassium channel family. S (TC 1.A.1.2) subfamily. Kv9.1/KCNS1 sub-subfamily. In terms of assembly, heterotetramer with KCNB1. Heterotetramer with KCNB2. Does not form homomultimers.

It is found in the cell membrane. Functionally, potassium channel regulatory subunit that modulate the delayed rectifier voltage-gated potassium channel activity of KCNB1 and KCNB2 by altering their kinetics, expression levels, and shifting the half-inactivation potential to more polarized values. While it does not form functional channels on its own, it can form functional heterotetrameric channels with KCNB1 and KCNB2. Each regulatory subunit has unique regulatory properties that can lead to extensive inhibition, significant changes in kinetics, and/or substantial shifts in the voltage dependencies of the inactivation process. This chain is Delayed-rectifier potassium channel regulatory subunit KCNS1, found in Gorilla gorilla gorilla (Western lowland gorilla).